Reading from the N-terminus, the 921-residue chain is Probable dipeptidyl-aminopeptidase B (921 aa).

Residues Met-1–Thr-33 are disordered. At Met-1 to Lys-109 the chain is on the cytoplasmic side. Over residues Asn-8–Glu-17 the composition is skewed to polar residues. A helical; Signal-anchor for type II membrane protein transmembrane segment spans residues Leu-110–Leu-130. The Vacuolar segment spans residues Gly-131 to Val-921. A glycan (N-linked (GlcNAc...) asparagine) is linked at Asn-362. Ser-768 serves as the catalytic Charge relay system. N-linked (GlcNAc...) asparagine glycosylation is present at Asn-822. Residues Asp-845 and His-878 each act as charge relay system in the active site.

It belongs to the peptidase S9B family.

Its subcellular location is the vacuole membrane. It carries out the reaction Release of an N-terminal dipeptide, Xaa-Yaa-|-Zaa-, from a polypeptide, preferentially when Yaa is Pro, provided Zaa is neither Pro nor hydroxyproline.. Its function is as follows. Type IV dipeptidyl-peptidase which removes N-terminal dipeptides sequentially from polypeptides having unsubstituted N-termini provided that the penultimate residue is proline. In Sclerotinia sclerotiorum (strain ATCC 18683 / 1980 / Ss-1) (White mold), this protein is Probable dipeptidyl-aminopeptidase B (dapB).